The chain runs to 241 residues: DnaJ homolog subfamily C member 4 (241 aa).

The J domain occupies threonine 34–leucine 99. The span at arginine 88 to leucine 99 shows a compositional bias: basic and acidic residues. The segment at arginine 88–alanine 129 is disordered. Residues glutamine 119–alanine 129 are compositionally biased toward polar residues. A helical transmembrane segment spans residues valine 156–phenylalanine 175. The disordered stretch occupies residues glutamine 212–proline 241.

The protein resides in the membrane. This is DnaJ homolog subfamily C member 4 (DNAJC4) from Homo sapiens (Human).